Reading from the N-terminus, the 150-residue chain is Large ribosomal subunit protein uL13 (150 aa).

The interval Ala-129 to Gln-150 is disordered.

Belongs to the universal ribosomal protein uL13 family. As to quaternary structure, part of the 50S ribosomal subunit.

This protein is one of the early assembly proteins of the 50S ribosomal subunit, although it is not seen to bind rRNA by itself. It is important during the early stages of 50S assembly. This is Large ribosomal subunit protein uL13 from Synechococcus sp. (strain WH7803).